Consider the following 234-residue polypeptide: Membrane glycoprotein RL11 (234 aa).

The first 23 residues, 1-23, serve as a signal peptide directing secretion; the sequence is MQTYSTPLTLIIVTSLFLFTTQG. A helical transmembrane segment spans residues 183 to 203; the sequence is LHCAWVSGLMIFVGALVICFL.

Its subcellular location is the host membrane. This Human cytomegalovirus (strain Merlin) (HHV-5) protein is Membrane glycoprotein RL11 (RL11).